Reading from the N-terminus, the 271-residue chain is Autophagy-related protein 27 (271 aa).

The signal sequence occupies residues 1–19 (MVSKTWICGFISIITVVQA). The region spanning 20–166 (LSCEKHDVLK…TLKGPSGCLK (147 aa)) is the MRH domain. At 20–199 (LSCEKHDVLK…PAKKAGGTSW (180 aa)) the chain is on the lumenal side. 3 disulfides stabilise this stretch: C22-C60, C71-C78, and C135-C164. Positions 161–194 (PSGCLKSKDDDKKNGDGDNGKDGDSEGKKPAKKA) are disordered. A compositionally biased stretch (basic and acidic residues) spans 166–189 (KSKDDDKKNGDGDNGKDGDSEGKK). The helical transmembrane segment at 200 to 220 (FTWLFLYALLFTLIYLMVVSF) threads the bilayer. Residues 221-271 (LNTRGGSFQDFRAEFIQRSTQFLTSLPEFCKEVVSRILGRSTAQRGGYSAV) lie on the Cytoplasmic side of the membrane.

Belongs to the ATG27 family. Forms a complex with ATG9 and ATG23.

It localises to the cytoplasmic vesicle membrane. Its subcellular location is the golgi apparatus membrane. The protein localises to the mitochondrion membrane. It is found in the preautophagosomal structure membrane. Functionally, effector of VPS34 phosphatidylinositol 3-phosphate kinase signaling. Regulates the cytoplasm to vacuole transport (Cvt) vesicle formation. Plays a role in ATG protein retrieval from the pre-autophagosomal structure (PAS) and is especially required for autophagy-dependent cycling of ATG9. This Saccharomyces cerevisiae (strain ATCC 204508 / S288c) (Baker's yeast) protein is Autophagy-related protein 27 (ATG27).